Here is a 504-residue protein sequence, read N- to C-terminus: Galactan beta-1,4-galactosyltransferase GALS3 (504 aa).

A helical membrane pass occupies residues 30–50 (LTFMALLVLCTLATLLPFIPS). Residues 242 to 456 (DYLYCGSSLY…YHGSISQRRE (215 aa)) form the GT92 domain.

Belongs to the glycosyltransferase 92 family. As to expression, expressed in root caps, mature leaves, top of the stems and seeds.

The protein resides in the golgi apparatus membrane. Involved in the biosynthesis of beta-1,4-galactan. Beta-1,4-galactans are abundant polysaccharides in plant cell walls and are found as side-chain of rhamnogalacturonan I, which is a major component of pectin. The chain is Galactan beta-1,4-galactosyltransferase GALS3 from Arabidopsis thaliana (Mouse-ear cress).